The sequence spans 110 residues: uncharacterized protein (110 aa).

This is an uncharacterized protein from Enterobacteria phage T4 (Bacteriophage T4).